We begin with the raw amino-acid sequence, 177 residues long: ATP-dependent protease subunit HslV (177 aa).

Residue threonine 6 is part of the active site. Positions 162, 165, and 168 each coordinate Na(+).

Belongs to the peptidase T1B family. HslV subfamily. As to quaternary structure, a double ring-shaped homohexamer of HslV is capped on each side by a ring-shaped HslU homohexamer. The assembly of the HslU/HslV complex is dependent on binding of ATP.

The protein localises to the cytoplasm. It catalyses the reaction ATP-dependent cleavage of peptide bonds with broad specificity.. Its activity is regulated as follows. Allosterically activated by HslU binding. Protease subunit of a proteasome-like degradation complex believed to be a general protein degrading machinery. This is ATP-dependent protease subunit HslV from Desulfovibrio desulfuricans (strain ATCC 27774 / DSM 6949 / MB).